The primary structure comprises 507 residues: Subtilisin-like protease 1 (507 aa).

The first 19 residues, 1–19 (MGVFRFISISLAAVSAANA), serve as a signal peptide directing secretion. Positions 20–116 (AQILSMPHAQ…VEPDTIISVN (97 aa)) are excised as a propeptide. The Inhibitor I9 domain maps to 34 to 113 (SYIVMMKDDT…VMFVEPDTII (80 aa)). In terms of domain architecture, Peptidase S8 spans 126-400 (SWGLARISNS…NVLISNGGAK (275 aa)). Active-site charge relay system residues include D158 and H190. The tract at residues 175–198 (GSNQVNDGDDRDGSGHGTHTSGTM) is disordered. An N-linked (GlcNAc...) asparagine glycan is attached at N251. The span at 282–294 (NENQDARSSSPAS) shows a compositional bias: polar residues. Positions 282 to 312 (NENQDARSSSPASEPSVCTVGSSAEDDSRSS) are disordered. S345 functions as the Charge relay system in the catalytic mechanism. Polar residues predominate over residues 378 to 394 (SSSITDVGPGTPTNVLI). The disordered stretch occupies residues 378-486 (SSSITDVGPG…YPGGDNFDFD (109 aa)). 2 stretches are compositionally biased toward pro residues: residues 405 to 428 (KPAP…PSQP) and 438 to 449 (EPFPGEPFPGEP). Low complexity predominate over residues 450-461 (FPGESSPGESAP). The span at 462-476 (APAPMPPSPQHPHTP) shows a compositional bias: pro residues.

It belongs to the peptidase S8 family.

The protein resides in the secreted. Its function is as follows. Secreted subtilisin-like serine protease with keratinolytic activity that contributes to pathogenicity. The chain is Subtilisin-like protease 1 (SUB1) from Trichophyton tonsurans (Scalp ringworm fungus).